A 483-amino-acid chain; its full sequence is Regulatory protein ViaA (483 aa).

This sequence belongs to the ViaA family. In terms of assembly, homodimer. Interacts with RavA.

Its subcellular location is the cytoplasm. In terms of biological role, component of the RavA-ViaA chaperone complex, which may act on the membrane to optimize the function of some of the respiratory chains. ViaA stimulates the ATPase activity of RavA. In Shigella boydii serotype 18 (strain CDC 3083-94 / BS512), this protein is Regulatory protein ViaA.